Consider the following 158-residue polypeptide: C-type lectin galactose-binding isoform (158 aa).

The N-terminal stretch at 1–20 is a signal peptide; it reads MGRFLLVTLSLLVVAFSLNG. Cystine bridges form between Cys-26–Cys-37, Cys-54–Cys-154, and Cys-129–Cys-146. Positions 33–155 constitute a C-type lectin domain; the sequence is KNGYCYKVFK…CTALRPFLCQ (123 aa). 5 residues coordinate Ca(2+): Gln-119, Asp-121, Glu-127, Asn-142, and Asp-143. Positions 119 to 121 match the Galactose-binding motif; sequence QPD.

Belongs to the true venom lectin family. As to quaternary structure, homodimer; disulfide-linked. As to expression, expressed by the venom gland.

It localises to the secreted. In terms of biological role, galactose-binding lectin that binds to and agglutinates erythrocytes in a calcium-dependent manner. This chain is C-type lectin galactose-binding isoform, found in Hoplocephalus stephensii (Stephens's banded snake).